The following is a 712-amino-acid chain: Methionine--tRNA ligase (712 aa).

A 'HIGH' region motif is present at residues 20–30; the sequence is PYANGKAHIGH. Positions 151, 154, 163, and 167 each coordinate Zn(2+). The 'KMSKS' region motif lies at 334 to 338; sequence KFSKT. Residue Lys-337 coordinates ATP. Positions 559 to 585 are disordered; sequence ANAKKSAAKGGEKEPSKSEGMGPSEEA. The tRNA-binding domain occupies 610-712; that stretch reads DFAKLDIRVG…KEIKPGSRIR (103 aa).

The protein belongs to the class-I aminoacyl-tRNA synthetase family. MetG type 1 subfamily. In terms of assembly, homodimer. The cofactor is Zn(2+).

It localises to the cytoplasm. The enzyme catalyses tRNA(Met) + L-methionine + ATP = L-methionyl-tRNA(Met) + AMP + diphosphate. Functionally, is required not only for elongation of protein synthesis but also for the initiation of all mRNA translation through initiator tRNA(fMet) aminoacylation. This is Methionine--tRNA ligase from Methanosarcina acetivorans (strain ATCC 35395 / DSM 2834 / JCM 12185 / C2A).